Here is a 231-residue protein sequence, read N- to C-terminus: Sugar fermentation stimulation protein homolog (231 aa).

It belongs to the SfsA family.

The polypeptide is Sugar fermentation stimulation protein homolog (Pyrobaculum islandicum (strain DSM 4184 / JCM 9189 / GEO3)).